The sequence spans 109 residues: Elicitor peptide 2 (109 aa).

The propeptide occupies 1–73 (MEKLDKRREE…KDDDVVVLLR (73 aa)). The span at 74–88 (DNKAKSKKRDKEKPS) shows a compositional bias: basic and acidic residues. Residues 74 to 109 (DNKAKSKKRDKEKPSSGRPGQTNSVPNAAIQVYKED) are disordered.

This sequence belongs to the brassicaceae elicitor peptide family.

Elicitor of plant defense. This Arabidopsis thaliana (Mouse-ear cress) protein is Elicitor peptide 2 (PEP2).